Here is a 359-residue protein sequence, read N- to C-terminus: Apelin receptor B (359 aa).

At 1 to 36 (MNAMDNMTADYSPDYFDDAVNSSMCEYDEWEPSYSL) the chain is on the extracellular side. Asn6 and Asn21 each carry an N-linked (GlcNAc...) asparagine glycan. 2 disulfide bridges follow: Cys25–Cys288 and Cys107–Cys186. The chain crosses the membrane as a helical span at residues 37 to 57 (IPVLYMLIFILGLTGNGVVIF). Topologically, residues 58–75 (TVWRAQSKRRAADVYIGN) are cytoplasmic. A helical membrane pass occupies residues 76–96 (LALADLTFVVTLPLWAVYTAL). At 97–108 (GYHWPFGVALCK) the chain is on the extracellular side. The helical transmembrane segment at 109-129 (ISSYVVLLNMYASVFCLTCLS) threads the bilayer. The Cytoplasmic portion of the chain corresponds to 130–151 (LDRYMAIVHSLTSTQLRTRGHM). A helical transmembrane segment spans residues 152–172 (RASLTAIWLLSGVLAAPTLLF). At 173–213 (RTTVYDVETNRTSCAMDFNLVVSQPGQETYWIAGLSISSTA) the chain is on the extracellular side. An N-linked (GlcNAc...) asparagine glycan is attached at Asn182. Residues 214–234 (LGFLIPLLAMMVCYGFIGCTV) traverse the membrane as a helical segment. Residues 235–251 (TRHFNSLRKEDQRKRRL) lie on the Cytoplasmic side of the membrane. Residues 252–272 (LKIITTLVVVFAACWMPFHVV) form a helical membrane-spanning segment. Topologically, residues 273-286 (KTMDALSYLNLAPD) are extracellular. Residues 287 to 307 (SCTFLNLLLLAHPYATCLAYV) traverse the membrane as a helical segment. The Cytoplasmic segment spans residues 308-359 (NSCLNPLLYAFFDLRFRSQCLCLLNLKKALHASPASSLSSQKTEAQSLATKV).

It belongs to the G-protein coupled receptor 1 family. As to expression, mesendodermal expression at the blastoderm margin appears by 4.5 hpf. At early gastrulation, expression is maintained ventrolaterally while expression in dorsal cells and random deep cells declines. During gastrulation and segmentation, expression is maintained in adaxial, intermediate, and lateral plate mesoderm. During late segmentation, expressed in several regions including the forming heart. By 24 hpf, expressed in the dorsal aorta, caudal vein, and intersomitic blood vessels.

The protein resides in the cell membrane. Its function is as follows. G protein-coupled receptor for peptide hormones apelin (apln) and apelin receptor early endogenous ligand (apela), that plays a role in the regulation of normal cardiovascular function and fluid homeostasis. When acting as apelin receptor, activates both G(i) protein pathway that inhibits adenylate cyclase activity, and the beta-arrestin pathway that promotes internalization of the receptor. Also functions as mechanoreceptor that is activated by pathological stimuli in a G-protein-independent fashion to induce beta-arrestin signaling, hence eliciting cardiac hypertrophy. However, the presence of apelin ligand blunts cardiac hypertrophic induction from APLNR/APJ on response to pathological stimuli. Plays a key role in early development such as gastrulation, blood vessels formation and heart morphogenesis by acting as a receptor for apela hormone, promoting endoderm and mesendoderm cell migration and regulating the migration of cells fated to become myocardial progenitors, respectively. Positively regulates angioblast migration toward the embryonic midline, i.e. the position of the future vessel formation, during vasculogenesis. May promote sinus venosus (SV)-derived endothelial cells migration into the developing heart to promote coronary blood vessel development. Required for cardiovascular development, particularly for intersomitic vein angiogenesis by acting as a receptor for apln hormone. Plays a role in various processes in adults such as regulation of blood vessel formation, blood pressure, heart contractility and heart failure. Acts redundantly with agtrl1a in heart development. In terms of biological role, g protein-coupled receptor for peptide hormones apelin (APLN) and apelin receptor early endogenous ligand (APELA/ELA), that plays a role in the regulation of normal cardiovascular function and fluid homeostasis. When acting as apelin receptor, activates both G(i) protein pathway that inhibits adenylate cyclase activity, and the beta-arrestin pathway that promotes internalization of the receptor. APLNR/APJ also functions as mechanoreceptor that is activated by pathological stimuli in a G-protein-independent fashion to induce beta-arrestin signaling, hence eliciting cardiac hypertrophy. Plays a key role in early development such as gastrulation, blood vessels formation and heart morphogenesis by acting as a APELA receptor. May promote angioblast migration toward the embryonic midline, i.e. the position of the future vessel formation, during vasculogenesis. Promotes sinus venosus (SV)-derived endothelial cells migration into the developing heart to promote coronary blood vessel development. Also plays a role in various processes in adults such as regulation of blood vessel formation, blood pressure, heart contractility and heart failure. The chain is Apelin receptor B (aplnrb) from Danio rerio (Zebrafish).